We begin with the raw amino-acid sequence, 305 residues long: Protoheme IX farnesyltransferase (305 aa).

9 helical membrane-spanning segments follow: residues Val-31–His-51, Pro-52–Ile-72, Val-96–Ala-118, Leu-123–Lys-145, Asn-151–Ser-171, Ile-179–Phe-199, Ile-225–Asn-245, Phe-247–Leu-267, and Phe-281–Ile-301.

It belongs to the UbiA prenyltransferase family. Protoheme IX farnesyltransferase subfamily.

The protein localises to the cell membrane. It catalyses the reaction heme b + (2E,6E)-farnesyl diphosphate + H2O = Fe(II)-heme o + diphosphate. Its pathway is porphyrin-containing compound metabolism; heme O biosynthesis; heme O from protoheme: step 1/1. Functionally, converts heme B (protoheme IX) to heme O by substitution of the vinyl group on carbon 2 of heme B porphyrin ring with a hydroxyethyl farnesyl side group. The polypeptide is Protoheme IX farnesyltransferase (Rickettsia africae (strain ESF-5)).